The following is a 383-amino-acid chain: Succinate--CoA ligase [ADP-forming] subunit beta (383 aa).

Residues 9 to 241 (KEVLHKFNVS…YDEEVKEEIE (233 aa)) form the ATP-grasp domain. ATP-binding positions include lysine 46, 53-55 (GRG), glutamate 99, serine 102, and glutamate 107. Mg(2+) contacts are provided by asparagine 196 and aspartate 210. Substrate contacts are provided by residues asparagine 261 and 318 to 320 (GIM).

Belongs to the succinate/malate CoA ligase beta subunit family. Heterotetramer of two alpha and two beta subunits. It depends on Mg(2+) as a cofactor.

It carries out the reaction succinate + ATP + CoA = succinyl-CoA + ADP + phosphate. The enzyme catalyses GTP + succinate + CoA = succinyl-CoA + GDP + phosphate. Its pathway is carbohydrate metabolism; tricarboxylic acid cycle; succinate from succinyl-CoA (ligase route): step 1/1. In terms of biological role, succinyl-CoA synthetase functions in the citric acid cycle (TCA), coupling the hydrolysis of succinyl-CoA to the synthesis of either ATP or GTP and thus represents the only step of substrate-level phosphorylation in the TCA. The beta subunit provides nucleotide specificity of the enzyme and binds the substrate succinate, while the binding sites for coenzyme A and phosphate are found in the alpha subunit. This chain is Succinate--CoA ligase [ADP-forming] subunit beta, found in Wolbachia sp. subsp. Drosophila simulans (strain wRi).